Reading from the N-terminus, the 1134-residue chain is Ankyrin repeat and SAM domain-containing protein 1A (1134 aa).

The residue at position 2 (Gly-2) is an N-acetylglycine. The segment covering 33–55 (GGGGGGGSGGGGGGSGGGGGGLG) has biased composition (gly residues). Residues 33–57 (GGGGGGGSGGGGGGSGGGGGGLGSS) are disordered. ANK repeat units lie at residues 79–108 (TGYT…LTNV), 112–141 (KGCY…SHTR), 148–177 (DNET…DPTM), 181–210 (KFET…NLLS), 214–243 (KKHT…DSNY), and 246–275 (EMGS…DVNI). A compositionally biased stretch (basic and acidic residues) spans 305–317 (HMTGKRSTKEVDK). 3 disordered regions span residues 305-338 (HMTG…KSQG), 375-422 (SMAS…EEDH), and 469-498 (VDGK…VPEQ). A Phosphothreonine modification is found at Thr-318. Residues 328–337 (SMDSISQKSQ) are compositionally biased toward polar residues. Residues 382–392 (SDQDSTNKEAE) are compositionally biased toward basic and acidic residues. At Ser-507 the chain carries Phosphoserine. The tract at residues 569 to 650 (LTGLPTTNSR…MGSRSESLSN (82 aa)) is disordered. The segment covering 572 to 588 (LPTTNSRSHPETLTHTA) has biased composition (polar residues). A compositionally biased stretch (basic and acidic residues) spans 613 to 628 (PKAELKLSRSLSKSDS). Phosphoserine occurs at positions 620, 622, 624, 626, 628, 647, 661, 663, 666, and 677. Over residues 633 to 650 (CSPTEDATMGSRSESLSN) the composition is skewed to polar residues. 2 SAM domains span residues 696-762 (TLEQ…LPKV) and 770-837 (NSPP…YEEP). Positions 856–868 (TSSPLSQNDSCTG) are enriched in polar residues. Disordered regions lie at residues 856 to 896 (TSSP…APSR) and 1079 to 1134 (AEMI…LSTN). Phosphoserine is present on Ser-887. A PID domain is found at 936 to 1091 (IFESCGYEAN…IETKSSKPVP (156 aa)). The span at 1123 to 1134 (PKPDSKRSLSTN) shows a compositional bias: basic and acidic residues.

Interacts (via SAM domain) with EPHA2 (via SAM domain). Interacts with EPHA8; EPHA8 kinase activity-independent but stimulated by EPHA8 ubiquitination. Interacts (via SAM domain) with EPHA6 (via SAM domain). In terms of processing, phosphorylated on tyrosine residues in response to EGF and PDGF. In terms of tissue distribution, widely expressed (at protein level).

The protein localises to the cytoplasm. The protein resides in the cell projection. In terms of biological role, regulator of different signaling pathways. Regulates EPHA8 receptor tyrosine kinase signaling to control cell migration and neurite retraction. This is Ankyrin repeat and SAM domain-containing protein 1A (ANKS1A) from Homo sapiens (Human).